Reading from the N-terminus, the 619-residue chain is Kininogen-2 (619 aa).

The signal sequence occupies residues 1–18; the sequence is MKLITILFLCSRLLPSLT. Position 19 is a pyrrolidone carboxylic acid (glutamine 19). The 105-residue stretch at 27-131 folds into the Cystatin kininogen-type 1 domain; sequence CNDQDVFKAV…IQTCLITPAE (105 aa). Intrachain disulfides connect cysteine 27/cysteine 589, cysteine 82/cysteine 93, cysteine 106/cysteine 125, cysteine 141/cysteine 144, cysteine 205/cysteine 217, cysteine 228/cysteine 247, cysteine 261/cysteine 264, cysteine 325/cysteine 337, and cysteine 348/cysteine 367. Asparagine 87 carries an N-linked (GlcNAc...) asparagine glycan. A glycan (O-linked (GalNAc...) threonine; partial) is linked at threonine 136. The 104-residue stretch at 150–253 folds into the Cystatin kininogen-type 2 domain; the sequence is TKSPDLEPVL…SQKCDLYPGE (104 aa). 2 N-linked (GlcNAc...) asparagine glycosylation sites follow: asparagine 168 and asparagine 169. N-linked (GlcNAc...) asparagine; partial glycosylation occurs at asparagine 197. Asparagine 204 is a glycosylation site (N-linked (GlcNAc...) asparagine). In terms of domain architecture, Cystatin kininogen-type 3 spans 270 to 373; that stretch reads VDSPDLEEAL…TVNCQPLGQT (104 aa). Asparagine 280 is a glycosylation site (N-linked (GlcNAc...) asparagine). A 4-hydroxyproline modification is found at proline 380. Residues 394-495 form a disordered region; it reads EGSTTVSLPH…GKNNGKHYDW (102 aa). O-linked (GalNAc...) serine glycosylation is present at serine 396. 2 O-linked (GalNAc...) threonine glycosylation sites follow: threonine 397 and threonine 398. O-linked (GalNAc...) serine glycans are attached at residues serine 400 and serine 404. A compositionally biased stretch (basic residues) spans 442 to 490; that stretch reads GHKHKHDQGHGHHRSHGLGHGHQKQHGLGHGHKHGHGHGKHKNKGKNNG. Serine 510 carries an O-linked (GalNAc...) serine glycan. 6 O-linked (GalNAc...) threonine glycosylation sites follow: threonine 518, threonine 522, threonine 534, threonine 546, threonine 551, and threonine 568.

Bradykinin is released from kininogen by plasma kallikrein. As to expression, plasma.

Its subcellular location is the secreted. The protein localises to the extracellular space. Functionally, (1) Kininogens are inhibitors of thiol proteases; (2) HMW-kininogen plays an important role in blood coagulation by helping to position optimally prekallikrein and factor XI next to factor XII; (3) HMW-kininogen inhibits the thrombin- and plasmin-induced aggregation of thrombocytes; (4) the active peptide bradykinin that is released from HMW-kininogen shows a variety of physiological effects: (4A) influence in smooth muscle contraction, (4B) induction of hypotension, (4C) natriuresis and diuresis, (4D) decrease in blood glucose level, (4E) it is a mediator of inflammation and causes (4E1) increase in vascular permeability, (4E2) stimulation of nociceptors (4E3) release of other mediators of inflammation (e.g. prostaglandins), (4F) it has a cardioprotective effect (directly via bradykinin action, indirectly via endothelium-derived relaxing factor action); (5) LMW-kininogen inhibits the aggregation of thrombocytes; (6) LMW-kininogen is in contrast to HMW-kininogen not involved in blood clotting. In Bos taurus (Bovine), this protein is Kininogen-2 (KNG2).